The chain runs to 234 residues: ATP-dependent dethiobiotin synthetase BioD (234 aa).

Residue 12–17 (DVGKTI) participates in ATP binding. Thr16 is a Mg(2+) binding site. Lys37 is an active-site residue. Residue Thr41 coordinates substrate. ATP is bound by residues Asp54 and 115 to 118 (EGAG). Mg(2+) contacts are provided by Asp54 and Glu115.

This sequence belongs to the dethiobiotin synthetase family. Homodimer. Requires Mg(2+) as cofactor.

Its subcellular location is the cytoplasm. It catalyses the reaction (7R,8S)-7,8-diammoniononanoate + CO2 + ATP = (4R,5S)-dethiobiotin + ADP + phosphate + 3 H(+). Its pathway is cofactor biosynthesis; biotin biosynthesis; biotin from 7,8-diaminononanoate: step 1/2. Functionally, catalyzes a mechanistically unusual reaction, the ATP-dependent insertion of CO2 between the N7 and N8 nitrogen atoms of 7,8-diaminopelargonic acid (DAPA, also called 7,8-diammoniononanoate) to form a ureido ring. This is ATP-dependent dethiobiotin synthetase BioD from Lysinibacillus sphaericus (strain C3-41).